Reading from the N-terminus, the 323-residue chain is PTS system mannose-specific EIIAB component (323 aa).

The 123-residue stretch at 2–124 (TIAIVIGTHG…VALAVETGRE (123 aa)) folds into the PTS EIIA type-4 domain. Histidine 10 acts as the Tele-phosphohistidine intermediate; for EIIA activity in catalysis. Phosphohistidine; by HPr is present on histidine 10. Lysine 55 is subject to N6-acetyllysine. Residues 137–155 (AAPAPAAAAPKAAPTPAKP) form a hinge region. Positions 157–320 (GPNDYMVIGL…KLKMMDLISK (164 aa)) constitute a PTS EIIB type-4 domain. Histidine 175 acts as the Pros-phosphohistidine intermediate; for EIIB activity in catalysis. Phosphohistidine; by EIIA is present on histidine 175. Lysine 234 is subject to N6-acetyllysine.

As to quaternary structure, homodimer.

The protein resides in the cytoplasm. It is found in the cell inner membrane. It catalyses the reaction D-mannose(out) + N(pros)-phospho-L-histidyl-[protein] = D-mannose 6-phosphate(in) + L-histidyl-[protein]. Its function is as follows. The phosphoenolpyruvate-dependent sugar phosphotransferase system (sugar PTS), a major carbohydrate active transport system, catalyzes the phosphorylation of incoming sugar substrates concomitantly with their translocation across the cell membrane. The enzyme II ManXYZ PTS system is involved in mannose transport. This is PTS system mannose-specific EIIAB component (manX) from Escherichia coli O157:H7.